The primary structure comprises 397 residues: Tryptophan synthase beta chain (397 aa).

Lys-88 carries the N6-(pyridoxal phosphate)lysine modification.

Belongs to the TrpB family. Tetramer of two alpha and two beta chains. Pyridoxal 5'-phosphate serves as cofactor.

The enzyme catalyses (1S,2R)-1-C-(indol-3-yl)glycerol 3-phosphate + L-serine = D-glyceraldehyde 3-phosphate + L-tryptophan + H2O. It participates in amino-acid biosynthesis; L-tryptophan biosynthesis; L-tryptophan from chorismate: step 5/5. Functionally, the beta subunit is responsible for the synthesis of L-tryptophan from indole and L-serine. In Haemophilus influenzae (strain PittEE), this protein is Tryptophan synthase beta chain.